The chain runs to 270 residues: tRNA pseudouridine synthase A (270 aa).

Asp51 (nucleophile) is an active-site residue. Tyr109 lines the substrate pocket.

Belongs to the tRNA pseudouridine synthase TruA family. In terms of assembly, homodimer.

It carries out the reaction uridine(38/39/40) in tRNA = pseudouridine(38/39/40) in tRNA. Functionally, formation of pseudouridine at positions 38, 39 and 40 in the anticodon stem and loop of transfer RNAs. In Burkholderia mallei (strain ATCC 23344), this protein is tRNA pseudouridine synthase A.